The primary structure comprises 380 residues: Cytochrome b (380 aa).

The next 4 helical transmembrane spans lie at 34–54, 78–99, 114–134, and 179–199; these read FGSL…LLAM, WLIR…YLHI, WNTG…GYVL, and FFAL…IHLT. The heme b site is built by His84 and His98. Residues His183 and His197 each contribute to the heme b site. His202 is a binding site for a ubiquinone. Helical transmembrane passes span 227–247, 289–309, 321–341, and 348–368; these read LKDI…ALFS, LGGV…PLLH, LSQL…WIGS, and FIII…VLFP.

It belongs to the cytochrome b family. The cytochrome bc1 complex contains 11 subunits: 3 respiratory subunits (MT-CYB, CYC1 and UQCRFS1), 2 core proteins (UQCRC1 and UQCRC2) and 6 low-molecular weight proteins (UQCRH/QCR6, UQCRB/QCR7, UQCRQ/QCR8, UQCR10/QCR9, UQCR11/QCR10 and a cleavage product of UQCRFS1). This cytochrome bc1 complex then forms a dimer. Heme b is required as a cofactor.

It localises to the mitochondrion inner membrane. Functionally, component of the ubiquinol-cytochrome c reductase complex (complex III or cytochrome b-c1 complex) that is part of the mitochondrial respiratory chain. The b-c1 complex mediates electron transfer from ubiquinol to cytochrome c. Contributes to the generation of a proton gradient across the mitochondrial membrane that is then used for ATP synthesis. This is Cytochrome b (MT-CYB) from Thalassarche impavida (Albatross).